Consider the following 104-residue polypeptide: Protein SMALL AUXIN UP-REGULATED RNA 9 (104 aa).

It belongs to the ARG7 family. In terms of assembly, interacts with and inhibits PP2C-D subfamily of type 2C phosphatases such as PP2C67/PP2C-D1. As to expression, expressed in etiolated hypocotyls, petioles, leaves and flowers.

Its subcellular location is the cell membrane. Provide a mechanistic link between auxin and plasma membrane H(+)-ATPases (PM H(+)-ATPases, e.g. AHA1 and AHA2), and triggers PM H(+)-ATPases activity by promoting phosphorylation of their C-terminal autoinhibitory domain as a result of PP2C-D subfamily of type 2C phosphatases inhibition, thus leading to the acidification of the apoplast and the facilitation of solutes and water uptake to drive cell expansion. Triggers plant growth probably by promoting cell elongation. Regulates branch angles and bending. Probably involved in light intensity mediated root development. In Arabidopsis thaliana (Mouse-ear cress), this protein is Protein SMALL AUXIN UP-REGULATED RNA 9.